The following is a 340-amino-acid chain: Tetraacyldisaccharide 4'-kinase (340 aa).

51-58 (HMGGAGKT) provides a ligand contact to ATP.

This sequence belongs to the LpxK family.

The enzyme catalyses a lipid A disaccharide + ATP = a lipid IVA + ADP + H(+). Its pathway is glycolipid biosynthesis; lipid IV(A) biosynthesis; lipid IV(A) from (3R)-3-hydroxytetradecanoyl-[acyl-carrier-protein] and UDP-N-acetyl-alpha-D-glucosamine: step 6/6. Transfers the gamma-phosphate of ATP to the 4'-position of a tetraacyldisaccharide 1-phosphate intermediate (termed DS-1-P) to form tetraacyldisaccharide 1,4'-bis-phosphate (lipid IVA). The sequence is that of Tetraacyldisaccharide 4'-kinase from Rhodopseudomonas palustris (strain ATCC BAA-98 / CGA009).